Reading from the N-terminus, the 313-residue chain is Interferon-inducible double-stranded RNA-dependent protein kinase activator A (313 aa).

The tract at residues 1–20 (MSHSRHRAEAPPLQREDSGT) is disordered. Sufficient for self-association and interaction with TARBP2 regions lie at residues 1–103 (MSHS…KANA), 102–195 (NASI…FSNI), and 195–313 (ISPE…AERK). A Phosphoserine modification is found at Ser-18. 3 consecutive DRBM domains span residues 34–101 (TPIQ…ILKA), 126–194 (NPIG…KFSN), and 240–308 (DYIQ…YLKI). A phosphoserine mark is found at Ser-167, Ser-246, and Ser-287.

This sequence belongs to the PRKRA family. Homodimer. Interacts with DICER1, AGO2 and TARBP2. Also able to interact with dsRNA. Interacts with EIF2AK2/PKR through its DRBM domains. Interacts with DUS2L (via DRBM domain). Interacts with UBC9. Forms a complex with UBC9 and p53/TP53. In terms of processing, phosphorylated at Ser-246 in unstressed cells and at Ser-287 in stressed cells. Phosphorylation at Ser-246 appears to be a prerequisite for subsequent phosphorylation at Ser-287. Phosphorylation at Ser-246 and Ser-287 are necessary for activation of EIF2AK2/PKR under conditions of stress. Expressed in brain, heart, kidney, liver, lung, muscle, spleen and testis.

It localises to the cytoplasm. The protein resides in the perinuclear region. Functionally, required for siRNA production by DICER1 and for subsequent siRNA-mediated post-transcriptional gene silencing. Does not seem to be required for processing of pre-miRNA to miRNA by DICER1. Activates EIF2AK2/PKR in the absence of double-stranded RNA (dsRNA), leading to phosphorylation of EIF2S1/EFI2-alpha and inhibition of translation and induction of apoptosis. Promotes UBC9-p53/TP53 association and sumoylation and phosphorylation of p53/TP53 at 'Lys-386' at 'Ser-392' respectively and enhances its activity in a EIF2AK2/PKR-dependent manner. The polypeptide is Interferon-inducible double-stranded RNA-dependent protein kinase activator A (Prkra) (Mus musculus (Mouse)).